The sequence spans 479 residues: MSVRVRLAPSPTGNLHIGTARTAVFNWLYARRHGGQFILRIEDTDRERSSPRYTRNILAGLAWLGLDWDEGPIYQSNRIARYQAVVQQLLDQGLAYRCYVSEVELEAMRAAQKAAGKAPRYDNRHRFLTEEQRRAYEAEGRQPVIRFKIEEPLEVSWVDLIRGPITWNTQDLGGDMVIARADGYPLYNLAVVVDDIDMGITHVIRGEDHIGNTPKQILLYRALGHEPPQFAHSPLILNPEGKKLSKRDGATSVAEFQQMGFLPEALKNYLALLSWSPPDGEEIFSLEKAATMFDFDRVNRAAARFDWNKLNWINSQYIKQLSPAELVERLTPFWQAAGFDLGSVPDPTWLEEVACLIAEGIDRLTEAPPLSRFLFQEPLSYSLPALEQLRLPGVAEAMAAMATTLAAAELPQPVSADSLKPLVEEVAKSQGMKKGLLLKSLRAALTGDLQGPDLMASFALLQRRGWALGRLEAVQKVVA.

The 'HIGH' region motif lies at 9-19 (PSPTGNLHIGT). The 'KMSKS' region signature appears at 243–247 (KLSKR). Lys246 serves as a coordination point for ATP.

Belongs to the class-I aminoacyl-tRNA synthetase family. Glutamate--tRNA ligase type 1 subfamily. As to quaternary structure, monomer.

The protein localises to the cytoplasm. It catalyses the reaction tRNA(Glu) + L-glutamate + ATP = L-glutamyl-tRNA(Glu) + AMP + diphosphate. Catalyzes the attachment of glutamate to tRNA(Glu) in a two-step reaction: glutamate is first activated by ATP to form Glu-AMP and then transferred to the acceptor end of tRNA(Glu). The sequence is that of Glutamate--tRNA ligase from Synechococcus sp. (strain JA-3-3Ab) (Cyanobacteria bacterium Yellowstone A-Prime).